Here is a 37-residue protein sequence, read N- to C-terminus: Large ribosomal subunit protein bL36A (37 aa).

This sequence belongs to the bacterial ribosomal protein bL36 family.

The sequence is that of Large ribosomal subunit protein bL36A from Neisseria meningitidis serogroup C (strain 053442).